The following is a 1203-amino-acid chain: Chromosome partition protein Smc (1203 aa).

32–39 (PNGSGKSN) is a binding site for ATP. Coiled-coil stretches lie at residues 167 to 203 (ILKYRRRKEKALRKLDAMSANLARLTDLTTELRRQLK), 250 to 288 (MMRRDHDEAAARLAVASEELAAHEAALTELSGRAESVQQ), and 327 to 497 (DVLE…LERK). An SMC hinge domain is found at 511-622 (GLLGSIAKLV…VVNYLAEALG (112 aa)). 3 coiled-coil regions span residues 657-689 (EVTSEIDKAGAELAAAEAHMAQLNAALSGALSE), 720-765 (RLGQ…NVEQ), and 976-1030 (YDRA…RKDL).

The protein belongs to the SMC family. Homodimer.

The protein localises to the cytoplasm. Its function is as follows. Required for chromosome condensation and partitioning. The protein is Chromosome partition protein Smc of Mycobacterium leprae (strain TN).